The following is a 282-amino-acid chain: Pantothenate synthetase (282 aa).

Position 26 to 33 (26 to 33) interacts with ATP; it reads MGNLHDGH. The Proton donor role is filled by H33. Position 57 (Q57) interacts with (R)-pantoate. Q57 is a beta-alanine binding site. 148–151 is an ATP binding site; that stretch reads GKKD. Q154 is a (R)-pantoate binding site. 185-188 is an ATP binding site; that stretch reads LSSR.

The protein belongs to the pantothenate synthetase family. As to quaternary structure, homodimer.

The protein localises to the cytoplasm. It carries out the reaction (R)-pantoate + beta-alanine + ATP = (R)-pantothenate + AMP + diphosphate + H(+). It functions in the pathway cofactor biosynthesis; (R)-pantothenate biosynthesis; (R)-pantothenate from (R)-pantoate and beta-alanine: step 1/1. Its function is as follows. Catalyzes the condensation of pantoate with beta-alanine in an ATP-dependent reaction via a pantoyl-adenylate intermediate. This chain is Pantothenate synthetase, found in Polaromonas sp. (strain JS666 / ATCC BAA-500).